A 179-amino-acid polypeptide reads, in one-letter code: Pyridoxal 5'-phosphate synthase subunit PdxT (179 aa).

48-50 serves as a coordination point for L-glutamine; it reads GES. C79 serves as the catalytic Nucleophile. L-glutamine is bound by residues R101 and 127 to 128; that span reads IR. Catalysis depends on charge relay system residues H163 and E165.

The protein belongs to the glutaminase PdxT/SNO family. As to quaternary structure, in the presence of PdxS, forms a dodecamer of heterodimers. Only shows activity in the heterodimer.

It catalyses the reaction aldehydo-D-ribose 5-phosphate + D-glyceraldehyde 3-phosphate + L-glutamine = pyridoxal 5'-phosphate + L-glutamate + phosphate + 3 H2O + H(+). The enzyme catalyses L-glutamine + H2O = L-glutamate + NH4(+). The protein operates within cofactor biosynthesis; pyridoxal 5'-phosphate biosynthesis. In terms of biological role, catalyzes the hydrolysis of glutamine to glutamate and ammonia as part of the biosynthesis of pyridoxal 5'-phosphate. The resulting ammonia molecule is channeled to the active site of PdxS. This Francisella tularensis subsp. tularensis (strain FSC 198) protein is Pyridoxal 5'-phosphate synthase subunit PdxT.